The sequence spans 457 residues: MPMSLRLHNNLTRRVEPFAPLDPSSPTLYVCGPTVYNYAHIGNARGPVVFDVLAALLRRRYGALRYARNITDVDDKINAAAQAQGVPISTITDRFAAIYRQDMAALGVVPPDIEPEATAHIPQIVAMIEQLIASAHAYAAEGHVLFAVASFADYGKLSRRDPDEMLAGARVDVAPYKRDPGDFVLWKPSSDDLPGWDSPWGRGRPGWHIECSAMAATHLGPTIDIHAGGVDLQFPHHENEIAQSECAHGGAVFARFWLHNGMLNFSGAKMSKSLGNIETVHDLIAKHPPEALRYALLSAHYRQPLDWSDGLIEQAKNTLDRLYGTLRDLHDVAASAVIPAPVEAALDDDLNTPQALAEVARIAGEARKANDAADRARLKAELLGAGLALGLLQQEPAAWFSRGADAGDDARIAALVDERSAAKKAKDFARADAIRQQLADEGIVLEDTAQGVRWKRA.

Cys-31 contributes to the Zn(2+) binding site. The short motif at 33 to 43 (PTVYNYAHIGN) is the 'HIGH' region element. Zn(2+) is bound by residues Cys-211, His-236, and Glu-240. Positions 269-273 (KMSKS) match the 'KMSKS' region motif. An ATP-binding site is contributed by Lys-272.

This sequence belongs to the class-I aminoacyl-tRNA synthetase family. As to quaternary structure, monomer. It depends on Zn(2+) as a cofactor.

It localises to the cytoplasm. The catalysed reaction is tRNA(Cys) + L-cysteine + ATP = L-cysteinyl-tRNA(Cys) + AMP + diphosphate. In Xanthomonas campestris pv. campestris (strain ATCC 33913 / DSM 3586 / NCPPB 528 / LMG 568 / P 25), this protein is Cysteine--tRNA ligase.